Here is a 291-residue protein sequence, read N- to C-terminus: Nucleoid occlusion protein (291 aa).

The H-T-H motif DNA-binding region spans 155–174 (EALAQRLGKGQSTVANKLRL).

It belongs to the ParB family.

The protein resides in the cytoplasm. It is found in the nucleoid. Its function is as follows. Effects nucleoid occlusion by binding relatively nonspecifically to DNA and preventing the assembly of the division machinery in the vicinity of the nucleoid, especially under conditions that disturb the cell cycle. It helps to coordinate cell division and chromosome segregation by preventing the formation of the Z ring through the nucleoid, which would cause chromosome breakage. The protein is Nucleoid occlusion protein of Bacillus pumilus (strain SAFR-032).